The chain runs to 750 residues: MIIRSPEPEVKIVVDRDPIKTSFEEWARPGHFSRTIAKGPDTTTWIWNLHADAHDFDSHTSDLEEISRKVFSAHFGQLSIIFLWLSGMYFHGARFSNYEAWLSDPTHIGPSAQVVWPIVGQEILNGDVGGGFRGIQITSGFFQIWRASGITSELQLYCTAIGALVFAALMLFAGWFHYHKAAPKLAWFQDVESMLNHHLAGLLGLGSLSWAGHQVHVSLPINQFLDAGVDPKEIPLPHEFILNRDLLAQLYPSFAEGATPFFTLNWSKYAEFLSFRGGLNPVTGGLWLTDIAHHHLAIAILFLIAGHMYRTNWGIGHGLKDILEAHKGPFTGQGHKGLYEILTTSWHAQLSLNLAMLGSSTIVVAHHMYSMPPYPYLAIDYGTQLSLFTHHMWIGGFLIVGAAAHAAIFMVRDYDPTTRYNDLLDRVLRHRDAIISHLNWACIFLGFHSFGLYIHNDTMSALGRPQDMFSDTAIQLQPIFAQWVQNTHALAPGATAPGATTSTSLTWGGSDLVAVGGKVALLPIPLGTADFLVHHIHAFTIHVTVLILLKGVLFARSSRLIPDKANLGFRFPCDGPGRGGTCQVSAWDHVFLGLFWMYNAISVVIFHFSWKMQSDVWGSISDQGVVTHITGGNFAQSSITINGWLRDFLWAQASQVIQSYGSSLSAYGLFFLGAHFVWAFSLMFLFSGRGYWQELIESIVWAHNKLKVAPATQPRALSIVQGRAVGVTHYLLGGIATTWAFFLARIIAVG.

8 helical membrane passes run 70 to 93 (VFSA…FHGA), 156 to 179 (LYCT…FHYH), 195 to 219 (LNHH…HVSL), 291 to 309 (IAHH…GHMY), 346 to 369 (WHAQ…HHMY), 385 to 411 (LSLF…IFMV), 433 to 455 (AIIS…LYIH), and 531 to 549 (FLVH…LILL). [4Fe-4S] cluster is bound by residues cysteine 573 and cysteine 582. The next 2 membrane-spanning stretches (helical) occupy residues 589 to 610 (HVFL…HFSW) and 664 to 686 (LSAY…MFLF). A chlorophyll a'-binding site is contributed by histidine 675. Chlorophyll a contacts are provided by methionine 683 and tyrosine 691. Tryptophan 692 lines the phylloquinone pocket. A helical membrane pass occupies residues 724–744 (AVGVTHYLLGGIATTWAFFLA).

It belongs to the PsaA/PsaB family. As to quaternary structure, the PsaA/B heterodimer binds the P700 chlorophyll special pair and subsequent electron acceptors. PSI consists of a core antenna complex that captures photons, and an electron transfer chain that converts photonic excitation into a charge separation. The eukaryotic PSI reaction center is composed of at least 11 subunits. The cofactor is P700 is a chlorophyll a/chlorophyll a' dimer, A0 is one or more chlorophyll a, A1 is one or both phylloquinones and FX is a shared 4Fe-4S iron-sulfur center..

The protein localises to the plastid. It is found in the chloroplast thylakoid membrane. It catalyses the reaction reduced [plastocyanin] + hnu + oxidized [2Fe-2S]-[ferredoxin] = oxidized [plastocyanin] + reduced [2Fe-2S]-[ferredoxin]. Functionally, psaA and PsaB bind P700, the primary electron donor of photosystem I (PSI), as well as the electron acceptors A0, A1 and FX. PSI is a plastocyanin-ferredoxin oxidoreductase, converting photonic excitation into a charge separation, which transfers an electron from the donor P700 chlorophyll pair to the spectroscopically characterized acceptors A0, A1, FX, FA and FB in turn. Oxidized P700 is reduced on the lumenal side of the thylakoid membrane by plastocyanin. The sequence is that of Photosystem I P700 chlorophyll a apoprotein A1 from Liriodendron tulipifera (Tuliptree).